We begin with the raw amino-acid sequence, 303 residues long: Probable WRKY transcription factor 30 (303 aa).

Residues 65–92 (DQVSQGGGSPKSDDSDQEPLVIKSSKKS) form a disordered region. The segment at residues 107 to 175 (GVDRTLDDGF…YRGIHSCSQA (69 aa)) is a DNA-binding region (WRKY). The span at 266 to 278 (SGSASHSASNSPS) shows a compositional bias: low complexity. The disordered stretch occupies residues 266–291 (SGSASHSASNSPSTVPLESPFESYDP).

It belongs to the WRKY group III family. As to quaternary structure, interacts with WRKY53, WRKY54 and WRKY70.

The protein resides in the nucleus. In terms of biological role, transcription factor. Interacts specifically with the W box (5'-(T)TGAC[CT]-3'), a frequently occurring elicitor-responsive cis-acting element. The polypeptide is Probable WRKY transcription factor 30 (Arabidopsis thaliana (Mouse-ear cress)).